The chain runs to 262 residues: 3-methyl-2-oxobutanoate hydroxymethyltransferase (262 aa).

Residues Asp-42 and Asp-81 each coordinate Mg(2+). 3-methyl-2-oxobutanoate-binding positions include 42 to 43, Asp-81, and Lys-110; that span reads DS. Position 112 (Glu-112) interacts with Mg(2+). Glu-180 serves as the catalytic Proton acceptor.

It belongs to the PanB family. As to quaternary structure, homodecamer; pentamer of dimers. Requires Mg(2+) as cofactor.

The protein resides in the cytoplasm. It catalyses the reaction 3-methyl-2-oxobutanoate + (6R)-5,10-methylene-5,6,7,8-tetrahydrofolate + H2O = 2-dehydropantoate + (6S)-5,6,7,8-tetrahydrofolate. The protein operates within cofactor biosynthesis; (R)-pantothenate biosynthesis; (R)-pantoate from 3-methyl-2-oxobutanoate: step 1/2. Functionally, catalyzes the reversible reaction in which hydroxymethyl group from 5,10-methylenetetrahydrofolate is transferred onto alpha-ketoisovalerate to form ketopantoate. In Legionella pneumophila subsp. pneumophila (strain Philadelphia 1 / ATCC 33152 / DSM 7513), this protein is 3-methyl-2-oxobutanoate hydroxymethyltransferase.